Here is a 346-residue protein sequence, read N- to C-terminus: Haptoglobin-related protein (346 aa).

Residues 1-16 (DLGAVIYLLLWGRQLF) constitute a signal peptide (not cleaved). Residues 32–85 (FPKPPEIANGYVEHLFRYQRKNYYRLRTEGDGVYTLNDKKQWINKAVGDKLPEC) enclose the Sushi domain. The Peptidase S1 domain maps to 102–344 (ILGGHLDAKG…IHVWVQKTIA (243 aa)). Intrachain disulfides connect Cys-249–Cys-280 and Cys-291–Cys-321.

It belongs to the peptidase S1 family.

The protein resides in the secreted. Its function is as follows. Primate-specific plasma protein associated with apolipoprotein L-I (apoL-I)-containing high-density lipoprotein (HDL). Binds hemoglobin with high affinity and may contribute to the clearance of cell-free hemoglobin to allow hepatic recycling of heme iron. In Pan troglodytes (Chimpanzee), this protein is Haptoglobin-related protein (HPR).